The chain runs to 222 residues: Small ribosomal subunit protein uS3 (222 aa).

In terms of domain architecture, KH type-2 spans 38-106 (IRKFISEKLA…NVHINIVEIK (69 aa)).

The protein belongs to the universal ribosomal protein uS3 family. As to quaternary structure, part of the 30S ribosomal subunit. Forms a tight complex with proteins S10 and S14.

Binds the lower part of the 30S subunit head. Binds mRNA in the 70S ribosome, positioning it for translation. The chain is Small ribosomal subunit protein uS3 from Lactobacillus gasseri (strain ATCC 33323 / DSM 20243 / BCRC 14619 / CIP 102991 / JCM 1131 / KCTC 3163 / NCIMB 11718 / NCTC 13722 / AM63).